The sequence spans 287 residues: Formamidopyrimidine-DNA glycosylase (287 aa).

The active-site Schiff-base intermediate with DNA is the proline 2. Catalysis depends on glutamate 3, which acts as the Proton donor. The Proton donor; for beta-elimination activity role is filled by lysine 61. Residues histidine 95, arginine 115, and arginine 157 each coordinate DNA. Residues 243-277 form an FPG-type zinc finger; sequence NVYGRADQPCRRCGTPVRREAFMNRSSYSCPRCQP. Arginine 267 acts as the Proton donor; for delta-elimination activity in catalysis.

This sequence belongs to the FPG family. In terms of assembly, monomer. Requires Zn(2+) as cofactor.

It carries out the reaction Hydrolysis of DNA containing ring-opened 7-methylguanine residues, releasing 2,6-diamino-4-hydroxy-5-(N-methyl)formamidopyrimidine.. It catalyses the reaction 2'-deoxyribonucleotide-(2'-deoxyribose 5'-phosphate)-2'-deoxyribonucleotide-DNA = a 3'-end 2'-deoxyribonucleotide-(2,3-dehydro-2,3-deoxyribose 5'-phosphate)-DNA + a 5'-end 5'-phospho-2'-deoxyribonucleoside-DNA + H(+). In terms of biological role, involved in base excision repair of DNA damaged by oxidation or by mutagenic agents. Acts as a DNA glycosylase that recognizes and removes damaged bases. Has a preference for oxidized purines, such as 7,8-dihydro-8-oxoguanine (8-oxoG). Has AP (apurinic/apyrimidinic) lyase activity and introduces nicks in the DNA strand. Cleaves the DNA backbone by beta-delta elimination to generate a single-strand break at the site of the removed base with both 3'- and 5'-phosphates. The protein is Formamidopyrimidine-DNA glycosylase of Salinispora arenicola (strain CNS-205).